Here is a 587-residue protein sequence, read N- to C-terminus: MSWARSRLCSTLSLAAVSARGATTEGAARRGMSAWPAPQEPGMEYQDAVRTLNTLQTNASYLEQVKRQRSDPQAQLEAMEMYLARSGLQVEDLNRLNIIHVTGTKGKGSTCAFTERILRNYGLKTGFFSSPHMVQVRERIRINGKPISPELFTKHFWCLYNQLEEFKDDSHVSMPSYFRFLTLMAFHVFLQEKVDLAVVEVGIGGAFDCTNIIRKPVVCGVSSLGIDHTSLLGDTVEKIAWQKGGIFKPGVPAFTVVQPEGPLAVLRDRAQQIGCPLYLCPPLEALEEVGLPLSLGLEGAHQRSNAALALQLAHCWLERQDHQDIQELKVSRPSIRWQLPLAPVFRPTPHMRRGLRDTVWPGRTQILQRGPLTWYLDGAHTTSSVQACVHWYRQSLERSKRTDGGSEVHILLFNSTGDRDSAALLKLLQPCQFDYAVFCPNVTEVSSIGNADQQNFTVTLDQVLLRCLQHQQHWNGLAEKQASSNLWSSCGPDPAGPGSLLLAPHPPQPTRTSSLVFSCISHALLWISQGRDPIFQPQSLPRNLLNHPTANSGASILREAAAIHVLVTGSLHLVGGVLKLLDPSMSQ.

The transit peptide at M1–G42 directs the protein to the mitochondrion. G106 to S109 lines the ATP pocket. Mg(2+)-binding residues include S130, E200, and H228. Positions 363 and 377 each coordinate ATP. S539 bears the Phosphoserine mark.

This sequence belongs to the folylpolyglutamate synthase family. In terms of assembly, monomer. The cofactor is a monovalent cation. As to expression, with non-specific probe, highest content in kidney and liver and lowest in spleen, lung and small intestine, and readily detectable in all of the tumors except hepatoma. Isoform 1 and isoform 2 expressed in leukemic cells and isoform 4 and isoform 5 in liver cells. Isoform 1 and isoform 2 exclusively expressed in hepatoma and Lewis lung carcinoma. Isoform 1 and isoform 2 also expressed in bone marrow, small intestine and spleen. Kidney expresses isoform 1, isoform 2, isoform 4 and isoform 5.

It localises to the mitochondrion inner membrane. The protein resides in the mitochondrion matrix. It is found in the cytoplasm. It carries out the reaction (6S)-5,6,7,8-tetrahydrofolyl-(gamma-L-Glu)(n) + L-glutamate + ATP = (6S)-5,6,7,8-tetrahydrofolyl-(gamma-L-Glu)(n+1) + ADP + phosphate + H(+). The protein operates within cofactor biosynthesis; tetrahydrofolylpolyglutamate biosynthesis. Inhibited by ammonium sulfate. Inhibited by pentaglutamate derivative of DDATHF, but isoform 2 is inhibited to a greater extent at lower concentrations of the compound that is isoform 5. Isoform 5 is virtually unaffected by H(4)PteGlu(5) and 5,10-CH(2)-H(4)PteGlu(5) at concentrations that substantially inhibits the activity of isoform 2. Isoform 2 and 5 are equally sensitive to polyglutamates of 10-CHO-H(4)-PteGlu. In terms of biological role, catalyzes conversion of folates to polyglutamate derivatives allowing concentration of folate compounds in the cell and the intracellular retention of these cofactors, which are important substrates for most of the folate-dependent enzymes that are involved in one-carbon transfer reactions involved in purine, pyrimidine and amino acid synthesis. Dihydrofolate, tetrahydrofolate, 5,10-methylenetetrahydrofolate, 10-formyltetrahydrofolate and 5-formyltetrahydrofolate are the best substrates. Folic acid and 5-methyltetrahydrofolate can also act as substrates. The protein is Folylpolyglutamate synthase, mitochondrial (Fpgs) of Mus musculus (Mouse).